Reading from the N-terminus, the 618-residue chain is Delta-like protein 3 (618 aa).

Residues 1-26 (MVSPRMSGLLSQTVILALIFLPQTRP) form the signal peptide. At 27 to 492 (AGVFELQIHS…LRPGDPQRYL (466 aa)) the chain is on the extracellular side. The DSL domain occupies 176–215 (ARCEPPAVGTACTRLCRPRSAPSRCGPGLRPCAPLEDECE). EGF-like domains are found at residues 216–249 (APLV…PLCT), 274–310 (GPGP…LRCE), 312–351 (SGVT…SNCE), 353–389 (RVDR…PRCE), 391–427 (DLDD…RDCR), and 429–465 (RADP…ARCE). 18 disulfides stabilise this stretch: cysteine 220-cysteine 231, cysteine 224-cysteine 237, cysteine 239-cysteine 248, cysteine 278-cysteine 289, cysteine 283-cysteine 298, cysteine 300-cysteine 309, cysteine 316-cysteine 327, cysteine 321-cysteine 339, cysteine 341-cysteine 350, cysteine 357-cysteine 368, cysteine 362-cysteine 377, cysteine 379-cysteine 388, cysteine 395-cysteine 406, cysteine 400-cysteine 415, cysteine 417-cysteine 426, cysteine 433-cysteine 444, cysteine 438-cysteine 453, and cysteine 455-cysteine 464. Residues 493-513 (LPPALGLLVAAGVAGAALLLV) form a helical membrane-spanning segment. Residues 514 to 618 (HVRRRGHSQD…PYPSSILSVK (105 aa)) lie on the Cytoplasmic side of the membrane. A compositionally biased stretch (polar residues) spans 546–562 (NLRTQEGSGDGPSSSVD). A disordered region spans residues 546–566 (NLRTQEGSGDGPSSSVDWNRP).

In terms of assembly, can bind and activate Notch-1 or another Notch receptor. Ubiquitinated by MIB (MIB1 or MIB2), leading to its endocytosis and subsequent degradation.

Its subcellular location is the membrane. In terms of biological role, inhibits primary neurogenesis. May be required to divert neurons along a specific differentiation pathway. Plays a role in the formation of somite boundaries during segmentation of the paraxial mesoderm. The sequence is that of Delta-like protein 3 (DLL3) from Homo sapiens (Human).